We begin with the raw amino-acid sequence, 286 residues long: D-tagatose-1,6-bisphosphate aldolase subunit KbaY (286 aa).

Residue D82 is the Proton donor of the active site. Positions 83 and 180 each coordinate Zn(2+). G181 provides a ligand contact to dihydroxyacetone phosphate. H208 contacts Zn(2+). Residues 209–211 (GAS) and 230–233 (NVAT) contribute to the dihydroxyacetone phosphate site.

The protein belongs to the class II fructose-bisphosphate aldolase family. TagBP aldolase KbaY subfamily. Homotetramer. Forms a complex with KbaZ. Zn(2+) serves as cofactor.

It catalyses the reaction D-tagatofuranose 1,6-bisphosphate = D-glyceraldehyde 3-phosphate + dihydroxyacetone phosphate. Its pathway is carbohydrate metabolism; D-tagatose 6-phosphate degradation; D-glyceraldehyde 3-phosphate and glycerone phosphate from D-tagatose 6-phosphate: step 2/2. Its function is as follows. Catalytic subunit of the tagatose-1,6-bisphosphate aldolase KbaYZ, which catalyzes the reversible aldol condensation of dihydroxyacetone phosphate (DHAP or glycerone-phosphate) with glyceraldehyde 3-phosphate (G3P) to produce tagatose 1,6-bisphosphate (TBP). Requires KbaZ subunit for full activity and stability. This chain is D-tagatose-1,6-bisphosphate aldolase subunit KbaY, found in Escherichia coli O127:H6 (strain E2348/69 / EPEC).